We begin with the raw amino-acid sequence, 119 residues long: uncharacterized protein (119 aa).

A helical transmembrane segment spans residues 80-104; the sequence is VFPLVYLFCVVFQFLSLGCYLSIFF.

It is found in the membrane. This is an uncharacterized protein from Saccharomyces cerevisiae (strain ATCC 204508 / S288c) (Baker's yeast).